Reading from the N-terminus, the 161-residue chain is SsrA-binding protein (161 aa).

It belongs to the SmpB family.

It is found in the cytoplasm. Its function is as follows. Required for rescue of stalled ribosomes mediated by trans-translation. Binds to transfer-messenger RNA (tmRNA), required for stable association of tmRNA with ribosomes. tmRNA and SmpB together mimic tRNA shape, replacing the anticodon stem-loop with SmpB. tmRNA is encoded by the ssrA gene; the 2 termini fold to resemble tRNA(Ala) and it encodes a 'tag peptide', a short internal open reading frame. During trans-translation Ala-aminoacylated tmRNA acts like a tRNA, entering the A-site of stalled ribosomes, displacing the stalled mRNA. The ribosome then switches to translate the ORF on the tmRNA; the nascent peptide is terminated with the 'tag peptide' encoded by the tmRNA and targeted for degradation. The ribosome is freed to recommence translation, which seems to be the essential function of trans-translation. The sequence is that of SsrA-binding protein from Desulforamulus reducens (strain ATCC BAA-1160 / DSM 100696 / MI-1) (Desulfotomaculum reducens).